Here is a 251-residue protein sequence, read N- to C-terminus: Hydroxyacylglutathione hydrolase (251 aa).

Zn(2+) contacts are provided by H53, H55, D57, H58, H110, D127, and H165.

It belongs to the metallo-beta-lactamase superfamily. Glyoxalase II family. In terms of assembly, monomer. It depends on Zn(2+) as a cofactor.

The catalysed reaction is an S-(2-hydroxyacyl)glutathione + H2O = a 2-hydroxy carboxylate + glutathione + H(+). The protein operates within secondary metabolite metabolism; methylglyoxal degradation; (R)-lactate from methylglyoxal: step 2/2. Functionally, thiolesterase that catalyzes the hydrolysis of S-D-lactoyl-glutathione to form glutathione and D-lactic acid. The protein is Hydroxyacylglutathione hydrolase of Escherichia coli O9:H4 (strain HS).